The sequence spans 265 residues: Probable cyclic nucleotide phosphodiesterase SynWH7803_1390 (265 aa).

7 residues coordinate Fe cation: Asp-9, His-11, Asp-49, Asn-86, His-157, His-196, and His-198. AMP contacts are provided by residues His-11, Asp-49, and 86-87 (NH). Residue His-198 participates in AMP binding.

This sequence belongs to the cyclic nucleotide phosphodiesterase class-III family. Requires Fe(2+) as cofactor.

The polypeptide is Probable cyclic nucleotide phosphodiesterase SynWH7803_1390 (Synechococcus sp. (strain WH7803)).